A 537-amino-acid polypeptide reads, in one-letter code: Mitochondrial distribution and morphology protein 34 (537 aa).

In terms of domain architecture, SMP-LTD spans 1 to 195; the sequence is MAFNFNWSPL…LPAIIHRLSL (195 aa). 4 disordered regions span residues 320-339, 348-403, 421-493, and 516-537; these read YTFS…RPSL, GLSL…IMPH, GRSP…DTSS, and KNGN…YEAR. Residues 355–371 are compositionally biased toward basic residues; that stretch reads RHSKAGRKKKTRVVNLR. Acidic residues predominate over residues 378 to 391; sequence ANSEEEEDTPETDS. A compositionally biased stretch (polar residues) spans 425–441; sequence DLQQQPRRPSFRAQATN.

Belongs to the MDM34 family. Component of the ER-mitochondria encounter structure (ERMES) or MDM complex, composed of MMM1, MDM10, MDM12 and MDM34.

Its subcellular location is the mitochondrion outer membrane. In terms of biological role, component of the ERMES/MDM complex, which serves as a molecular tether to connect the endoplasmic reticulum (ER) and mitochondria. Components of this complex are involved in the control of mitochondrial shape and protein biogenesis, and function in nonvesicular lipid trafficking between the ER and mitochondria. MDM34 is required for the interaction of the ER-resident membrane protein MMM1 and the outer mitochondrial membrane-resident beta-barrel protein MDM10. This is Mitochondrial distribution and morphology protein 34 from Chaetomium globosum (strain ATCC 6205 / CBS 148.51 / DSM 1962 / NBRC 6347 / NRRL 1970) (Soil fungus).